The following is a 272-amino-acid chain: MKRQFEDVTRIVIKIGTSSLVLPTGKINLEKIDQLAFVISSLMNKGKEVILVSSGAMGFGLDILKMEKRPTNLAKQQAVSSVGQVAMMSLYSQIFAHYQTNVSQILLTRDVVVFPESLANVTNAFESLISLGIVPIVNENDAVSVDEMDHATKFGDNDRLSAVVAGITKADLLIMLSDIDGLFDKNPTIYEDAQLRSHVAVITQEIIASAGGAGSKFGTGGMLSKIQSAQMVFENKGQMVLMNGANPRDILRVLEGQPLGTWFKQIEEVTHD.

K14 is a binding site for ATP. Positions 54, 141, and 157 each coordinate substrate. Residues 177-178 and 219-225 each bind ATP; these read SD and TGGMLSK.

Belongs to the glutamate 5-kinase family.

It is found in the cytoplasm. It carries out the reaction L-glutamate + ATP = L-glutamyl 5-phosphate + ADP. Its pathway is amino-acid biosynthesis; L-proline biosynthesis; L-glutamate 5-semialdehyde from L-glutamate: step 1/2. Functionally, catalyzes the transfer of a phosphate group to glutamate to form L-glutamate 5-phosphate. The polypeptide is Glutamate 5-kinase (Streptococcus pyogenes serotype M28 (strain MGAS6180)).